The sequence spans 319 residues: Probable deoxyhypusine synthase (319 aa).

Lys287 serves as the catalytic Nucleophile.

Belongs to the deoxyhypusine synthase family. It depends on NAD(+) as a cofactor.

The catalysed reaction is [eIF5A protein]-L-lysine + spermidine = [eIF5A protein]-deoxyhypusine + propane-1,3-diamine. The protein operates within protein modification; eIF5A hypusination. In terms of biological role, catalyzes the NAD-dependent oxidative cleavage of spermidine and the subsequent transfer of the butylamine moiety of spermidine to the epsilon-amino group of a specific lysine residue of the eIF-5A precursor protein to form the intermediate deoxyhypusine residue. The chain is Probable deoxyhypusine synthase from Ignicoccus hospitalis (strain KIN4/I / DSM 18386 / JCM 14125).